Consider the following 288-residue polypeptide: ATP synthase gamma chain (288 aa).

Belongs to the ATPase gamma chain family. F-type ATPases have 2 components, CF(1) - the catalytic core - and CF(0) - the membrane proton channel. CF(1) has five subunits: alpha(3), beta(3), gamma(1), delta(1), epsilon(1). CF(0) has three main subunits: a, b and c.

It is found in the cell membrane. Functionally, produces ATP from ADP in the presence of a proton gradient across the membrane. The gamma chain is believed to be important in regulating ATPase activity and the flow of protons through the CF(0) complex. The chain is ATP synthase gamma chain from Macrococcus caseolyticus (strain JCSC5402) (Macrococcoides caseolyticum).